Consider the following 422-residue polypeptide: Dihydroorotase (422 aa).

Zn(2+) is bound by residues histidine 61 and histidine 63. Residues 63 to 65 and asparagine 95 each bind substrate; that span reads HLR. Position 153 (aspartate 153) interacts with Zn(2+). Asparagine 278 lines the substrate pocket. Aspartate 305 contributes to the Zn(2+) binding site. The active site involves aspartate 305. Residues histidine 309 and 322-323 each bind substrate; that span reads PG.

Belongs to the metallo-dependent hydrolases superfamily. DHOase family. Class I DHOase subfamily. As to quaternary structure, monomer. Forms a 1:1 stoichiometric complex with PyrB. The complex exists as an equilibrium mixture of heterohexamers, composed of 3 PyrC and 3 PyrB subunits, and dodecamers. The complex has both DHOase and ATCase activities. Zn(2+) serves as cofactor.

The catalysed reaction is (S)-dihydroorotate + H2O = N-carbamoyl-L-aspartate + H(+). The protein operates within pyrimidine metabolism; UMP biosynthesis via de novo pathway; (S)-dihydroorotate from bicarbonate: step 3/3. The monomer has very low activity by itself. Activated several thousandfold by formation of a complex with PyrB aspartate carbamoyltransferase (ATCase). In terms of biological role, catalyzes the reversible cyclization of carbamoyl aspartate to dihydroorotate. The chain is Dihydroorotase from Aquifex aeolicus (strain VF5).